The primary structure comprises 298 residues: HTH-type transcriptional regulator ArgP (298 aa).

The region spanning 4-60 (LDYKWIEALDAVVYQGSFERAAEHLFVSQSAISQRIKQLEKFLAQPVLIREQPPKPT) is the HTH lysR-type domain. The segment at residues 21-40 (FERAAEHLFVSQSAISQRIK) is a DNA-binding region (H-T-H motif).

Belongs to the LysR transcriptional regulatory family. In terms of assembly, homodimer.

Its function is as follows. Controls the transcription of genes involved in arginine and lysine metabolism. This is HTH-type transcriptional regulator ArgP from Vibrio parahaemolyticus serotype O3:K6 (strain RIMD 2210633).